The following is an 864-amino-acid chain: E3 ubiquitin-protein ligase Itchy (864 aa).

Residues 1–115 (MSDSGPQLDS…LKSNNMKLEE (115 aa)) form the C2 domain. Serine 2 bears the N-acetylserine mark. Positions 151–164 (NGETSCSESTTQND) are enriched in polar residues. Residues 151-294 (NGETSCSEST…SQAPLPPGWE (144 aa)) form a disordered region. Residues 165 to 174 (DGCRTRDDTR) show a composition bias toward basic and acidic residues. Low complexity predominate over residues 195–206 (NGNNSPSLSNGG). Serine 199 is subject to Phosphoserine; by MAPK8. Residues 210–224 (SRPPRPSRPPPPTPR) show a composition bias toward pro residues. Threonine 222 is subject to Phosphothreonine; by MAPK8. The span at 230 to 259 (NGSPSTNSDSDGSSTGSLPPTNTNVNTSTS) shows a compositional bias: low complexity. A Phosphoserine; by MAPK8 modification is found at serine 232. WW domains lie at 287–320 (APLP…RPEP) and 319–352 (EPLP…RPTL). Threonine 346 is modified (phosphothreonine; by SGK3). The segment at 356–432 (RNYEQWQLQR…RITQWEDPRS (77 aa)) is required for interaction with FYN. A Phosphotyrosine; by FYN modification is found at tyrosine 381. WW domains lie at 399–432 (GPLP…DPRS) and 439–472 (KPLP…DPRT). Phosphoserine; by SGK3 is present on serine 411. The region spanning 530–864 (SPQDLRRRLW…IEETEGFGQE (335 aa)) is the HECT domain. The MAP kinase docking site stretch occupies residues 535 to 544 (RRRLWVIFPG). Cysteine 832 acts as the Glycyl thioester intermediate in catalysis.

Monomer. Part of a ternary complex composed of SMAD3, ITCH/AIP4 and NEDD9/HEF1; within the complex NEDD9/HEF1 interacts (via N-terminus) with ITCH/AIP4 (via WW domains); the complex mediates ubiquitination and proteasomal degradation of NEDD9/HEF1. Interacts (via WW domains) with OCNL. Interacts (via WW domains) with NOTCH1. Interacts (via WW domains) JUN. Interacts with JUNB; the interaction promotes ITCH-mediated ubiquitination and degradation of JUNB. Interacts with FYN; the interaction phosphorylates ITCH on Tyr-381 decreasing binding of JUNB. Interacts (via WW domain 2) with N4BP1; the interaction inhibits the E3 ubiquitin-protein ligase activity. Interacts with NDFIP1 and NDFIP2; the interaction with NDFIP proteins activates the E3 ubiquitin-protein ligase and may induce its recruitment to exosomes. Interacts with ARHGEF7. Interacts with RNF11. Interacts (via the WW 1 domain) with NFE2 (via the PXY motif 1); the interaction promotes 'Lys-63'-linked ubiquitination of NFE2, retains it in the cytoplasm and prevents its transactivation activity. Interacts (via WW domains) with CXCR4 (via C-terminus); the interaction depends on CXCR4 phosphorylation. Found in a complex with E3 ligase DTX3L and ESCRT-0 components HGS and STAM. Interacts with DTX3L (via C-terminus); the interaction is increased upon CXCL12 stimulation and inhibits ITCH catalytic activity (the interaction is direct). Interacts with HGS. Interacts (via WW domains) with PCBP2 within a complex containing ITCH, MAVS and PCBP2. Interacts (via WW domains) with TXNIP (via C-terminus). Interacts with p15 BID. Interacts with ERBB4. Interacts with DTX1. Interacts with SPART. Interacts with SNX9 and SNX18. Interacts (via its WW domains) with ATN1. Interacts (via WW domains) with SGK3. Interacts with CBLC. Interacts with OTUD7B. Interacts (via WW domain 1,2 and 3) with PI4K2A; the interaction inhibits PI4K2A catalytic activity and promotes ITCH catalytic activity. Interacts with ARRDC4. Part of a complex containing ITCH, NDFIP1 and MAP3K7. Interacts with UBE2L3; the interaction is mediated by NDFIP1. Interacts with MAPK8/JNK1. Interacts (via WW domains) with ARRDC1 (via PPxY motifs); the interaction is direct and participates in the recruitment of the ubiquitin-protein ligase ITCH to the NOTCH1 receptor. Interacts (via WW domains) with ARRDC2. Interacts (via WW domains) with ARRDC3. Interacts directly with LDLRAD3; this interaction promotes ITCH auto-ubiquitination leading to its degradation. Interacts with ENTREP1; enhances the ubiquitination of CXCR4 by ITCH and its subsequent endocytosis. Interacts with USP12 and WDR48/UAF1; the interaction is more efficient when both USP12 and WDR48/UAF1 are involved and may facilitate the recruitment of the USP12 deubiquitinase complex to Notch. In terms of assembly, (Microbial infection) Interacts with Epstein-Barr virus LMP2A. In terms of processing, on T-cell activation, phosphorylation by the JNK cascade on serine and threonine residues surrounding the PRR domain accelerates the ubiquitination and degradation of JUN and JUNB. The increased ITCH catalytic activity due to phosphorylation by JNK1 may occur due to a conformational change disrupting the interaction between the PRR/WW motifs domain and the HECT domain and, thus exposing the HECT domain. Phosphorylation by FYN reduces interaction with JUNB and negatively controls JUN ubiquitination and degradation. Interacts directly with LDLRAD3; this interaction promotes ITCH auto-ubiquitination leading to its degradation. Monoubiquitinated. Autopolyubiquitinated with 'Lys-63' linkages which does not lead to protein degradation. In terms of tissue distribution, detected in uterus (at protein level). Widely expressed.

The protein resides in the cell membrane. It localises to the cytoplasm. It is found in the nucleus. The protein localises to the early endosome membrane. Its subcellular location is the endosome membrane. It catalyses the reaction S-ubiquitinyl-[E2 ubiquitin-conjugating enzyme]-L-cysteine + [acceptor protein]-L-lysine = [E2 ubiquitin-conjugating enzyme]-L-cysteine + N(6)-ubiquitinyl-[acceptor protein]-L-lysine.. It functions in the pathway protein modification; protein ubiquitination. Its activity is regulated as follows. Activated by NDFIP1- and NDFIP2-binding. Activated by PI4K2A-binding. Inhibited by DTX3L-binding. Inhibited by N4BP1 binding. Acts as an E3 ubiquitin-protein ligase which accepts ubiquitin from an E2 ubiquitin-conjugating enzyme in the form of a thioester and then directly transfers the ubiquitin to targeted substrates. It catalyzes 'Lys-29'-, 'Lys-48'- and 'Lys-63'-linked ubiquitin conjugation. Involved in the control of inflammatory signaling pathways. Is an essential component of a ubiquitin-editing protein complex, comprising also TNFAIP3, TAX1BP1 and RNF11, that ensures the transient nature of inflammatory signaling pathways. Promotes the association of the complex after TNF stimulation. Once the complex is formed, TNFAIP3 deubiquitinates 'Lys-63' polyubiquitin chains on RIPK1 and catalyzes the formation of 'Lys-48'-polyubiquitin chains. This leads to RIPK1 proteasomal degradation and consequently termination of the TNF- or LPS-mediated activation of NFKB1. Ubiquitinates RIPK2 by 'Lys-63'-linked conjugation and influences NOD2-dependent signal transduction pathways. Regulates the transcriptional activity of several transcription factors involved in immune response. Ubiquitinates NFE2 by 'Lys-63' linkages and is implicated in the control of the development of hematopoietic lineages. Mediates JUN ubiquitination and degradation. Mediates JUNB ubiquitination and degradation. Critical regulator of type 2 helper T (Th2) cell cytokine production by inducing JUNB ubiquitination and degradation. Involved in the negative regulation of MAVS-dependent cellular antiviral responses. Ubiquitinates MAVS through 'Lys-48'-linked conjugation resulting in MAVS proteasomal degradation. Following ligand stimulation, regulates sorting of Wnt receptor FZD4 to the degradative endocytic pathway probably by modulating PI42KA activity. Ubiquitinates PI4K2A and negatively regulates its catalytic activity. Ubiquitinates chemokine receptor CXCR4 and regulates sorting of CXCR4 to the degradative endocytic pathway following ligand stimulation by ubiquitinating endosomal sorting complex required for transport ESCRT-0 components HGS and STAM. Targets DTX1 for lysosomal degradation and controls NOTCH1 degradation, in the absence of ligand, through 'Lys-29'-linked polyubiquitination. Ubiquitinates SNX9. Ubiquitinates MAP3K7 through 'Lys-48'-linked conjugation. Together with UBR5, involved in the regulation of apoptosis and reactive oxygen species levels through the ubiquitination and proteasomal degradation of TXNIP: catalyzes 'Lys-48'-/'Lys-63'-branched ubiquitination of TXNIP. ITCH synthesizes 'Lys-63'-linked chains, while UBR5 is branching multiple 'Lys-48'-linked chains of substrate initially modified. Mediates the antiapoptotic activity of epidermal growth factor through the ubiquitination and proteasomal degradation of p15 BID. Ubiquitinates BRAT1 and this ubiquitination is enhanced in the presence of NDFIP1. Ubiquitinates NEDD9/HEF1, resulting in proteasomal degradation of NEDD9/HEF1. In Mus musculus (Mouse), this protein is E3 ubiquitin-protein ligase Itchy (Itch).